We begin with the raw amino-acid sequence, 238 residues long: Pyridoxine 5'-phosphate synthase (238 aa).

Residue Asn9 coordinates 3-amino-2-oxopropyl phosphate. 11-12 (DH) contacts 1-deoxy-D-xylulose 5-phosphate. Arg20 is a binding site for 3-amino-2-oxopropyl phosphate. The active-site Proton acceptor is His45. 1-deoxy-D-xylulose 5-phosphate-binding residues include Arg47 and His52. The Proton acceptor role is filled by Glu72. 1-deoxy-D-xylulose 5-phosphate is bound at residue Thr102. His189 (proton donor) is an active-site residue. Residues Gly190 and 211–212 (GH) each bind 3-amino-2-oxopropyl phosphate.

The protein belongs to the PNP synthase family. In terms of assembly, homooctamer; tetramer of dimers.

The protein localises to the cytoplasm. The enzyme catalyses 3-amino-2-oxopropyl phosphate + 1-deoxy-D-xylulose 5-phosphate = pyridoxine 5'-phosphate + phosphate + 2 H2O + H(+). It functions in the pathway cofactor biosynthesis; pyridoxine 5'-phosphate biosynthesis; pyridoxine 5'-phosphate from D-erythrose 4-phosphate: step 5/5. In terms of biological role, catalyzes the complicated ring closure reaction between the two acyclic compounds 1-deoxy-D-xylulose-5-phosphate (DXP) and 3-amino-2-oxopropyl phosphate (1-amino-acetone-3-phosphate or AAP) to form pyridoxine 5'-phosphate (PNP) and inorganic phosphate. The protein is Pyridoxine 5'-phosphate synthase of Ehrlichia canis (strain Jake).